A 246-amino-acid chain; its full sequence is Outer membrane protein assembly factor BamD (246 aa).

The N-terminal stretch at 1-22 (MKKKNSIIFVFMILFFNSTVQS) is a signal peptide.

Belongs to the BamD family. In terms of assembly, part of the Bam complex.

The protein localises to the cell outer membrane. Its function is as follows. Part of the outer membrane protein assembly complex, which is involved in assembly and insertion of beta-barrel proteins into the outer membrane. This is Outer membrane protein assembly factor BamD from Buchnera aphidicola subsp. Acyrthosiphon pisum (strain APS) (Acyrthosiphon pisum symbiotic bacterium).